We begin with the raw amino-acid sequence, 91 residues long: Small ribosomal subunit protein uS19 (91 aa).

Belongs to the universal ribosomal protein uS19 family.

Its function is as follows. Protein S19 forms a complex with S13 that binds strongly to the 16S ribosomal RNA. The chain is Small ribosomal subunit protein uS19 from Lactiplantibacillus plantarum (strain ATCC BAA-793 / NCIMB 8826 / WCFS1) (Lactobacillus plantarum).